A 139-amino-acid chain; its full sequence is Small ribosomal subunit protein uS11 (139 aa).

2 disordered regions span residues 1 to 33 (MPPA…AAHI) and 118 to 139 (GAIS…RRRV). Over residues 14–23 (KGQKTRRREK) the composition is skewed to basic residues.

Belongs to the universal ribosomal protein uS11 family. Part of the 30S ribosomal subunit. Interacts with proteins S7 and S18. Binds to IF-3.

In terms of biological role, located on the platform of the 30S subunit, it bridges several disparate RNA helices of the 16S rRNA. Forms part of the Shine-Dalgarno cleft in the 70S ribosome. This is Small ribosomal subunit protein uS11 from Mycobacterium tuberculosis (strain ATCC 25177 / H37Ra).